A 205-amino-acid chain; its full sequence is Protein PAXX (205 aa).

The PISA domain occupies 39–81 (FNLYVTDAAELWSTCFSPDSLARLKARFGLSGAEDIHSRFRAA). Position 147 is a phosphothreonine (threonine 147). Positions 147–159 (TITSPKKNTQPAG) are enriched in polar residues. The segment at 147–205 (TITSPKKNTQPAGTQFLPELDHQRGSSGPGVRRRCPGESLINPGFKSKKPAAGVDFDET) is disordered. Serine 150 carries the post-translational modification Phosphoserine. The mediates interaction with XRCC5/Ku80 and XRCC6/Ku70 and association with the non-homologous end joining core complex stretch occupies residues 172–205 (SSGPGVRRRCPGESLINPGFKSKKPAAGVDFDET). An XLM motif is present at residues 191–205 (FKSKKPAAGVDFDET).

Belongs to the XRCC4-XLF family. PAXX subfamily. Homodimer. Interacts with the DNA-bound XRCC5/Ku80 and XRCC6/Ku70 heterodimer (Ku complex); the interaction is direct. Associated component of the non-homologous end joining (NHEJ) complex, composed of the core proteins PRKDC, LIG4, XRCC4, XRCC6/Ku70, XRCC5/Ku86 and NHEJ1/XLF. Interacts with POLL (DNA polymerase lambda); promoting POLL recruitment to double-strand breaks (DSBs) and stimulation of the end-filling activity of POLL. Phosphorylation may inhibit interaction with the DNA-bound XRCC5/Ku80 and XRCC6/Ku70 heterodimer (Ku complex).

It is found in the nucleus. Its subcellular location is the chromosome. In terms of biological role, non-essential DNA repair protein involved in DNA non-homologous end joining (NHEJ); participates in double-strand break (DSB) repair and V(D)J recombination. May act as a scaffold required for accumulation of the Ku heterodimer, composed of XRCC5/Ku80 and XRCC6/Ku70, at double-strand break sites and promote the assembly and/or stability of the NHEJ machinery. Involved in NHEJ by promoting the ligation of blunt-ended DNA ends. Together with NHEJ1/XLF, collaborates with DNA polymerase lambda (POLL) to promote joining of non-cohesive DNA ends. Constitutes a non-essential component of classical NHEJ: has a complementary but distinct function with NHEJ1/XLF in DNA repair. This chain is Protein PAXX, found in Mus musculus (Mouse).